Here is a 188-residue protein sequence, read N- to C-terminus: MIMGNLELFLIAVGLSMDAFAVAISKGLSMRRMSYKTALITGLFFGGFQALMPLIGFLLGTRFESYITAIDHWIAFILLSLIGLNMIKESRGPCEIIEDRFNLKDMIILSLATSIDALAVGITFAFLHVDIVPAVSMIGVTTFLFSFLGVKIGNVFGECYKARAELAGGVILILMGLKILLEHLGFLG.

The next 6 membrane-spanning stretches (helical) occupy residues 2 to 22, 39 to 59, 67 to 87, 107 to 127, 129 to 149, and 166 to 186; these read IMGN…AFAV, LITG…GFLL, ITAI…LNMI, IILS…FAFL, VDIV…SFLG, and LAGG…HLGF.

It belongs to the MntP (TC 9.B.29) family.

It localises to the cell membrane. Probably functions as a manganese efflux pump. This is Putative manganese efflux pump MntP from Desulfitobacterium hafniense (strain Y51).